A 350-amino-acid chain; its full sequence is Xylene/toluene monooxygenase electron transfer component XylA (350 aa).

A 2Fe-2S ferredoxin-type domain is found at 16–108 (PESTVSVRGQ…DLEIELDTVL (93 aa)). 4 residues coordinate [2Fe-2S] cluster: C52, C57, C60, and C92. Residues 109-350 (GQALVPIETS…ADRFYNRPPC (242 aa)) form a ferredoxin--NADH reductase region. The FAD-binding FR-type domain maps to 114–213 (PIETSALISK…RAPYGQFGLH (100 aa)).

Belongs to the bacterial ring-hydroxylating dioxygenase ferredoxin reductase family. In terms of assembly, monomer. The xylene/toluene monooxygenase is composed of two subunits: the electron transfer component XylA and the hydroxylase component XylM. FAD is required as a cofactor. The cofactor is [2Fe-2S] cluster.

The protein resides in the cell inner membrane. It catalyses the reaction 2 reduced [2Fe-2S]-[ferredoxin] + NAD(+) + H(+) = 2 oxidized [2Fe-2S]-[ferredoxin] + NADH. The reductase activity is completely inhibited by quercetin (a common inhibitor of mammalian oxidoreductases) and p-chloromercuribenzoate, but not by iodoacetimide, N-ethylmaleimide and pyrrazole. Its function is as follows. Component of a monooxygenase that catalyzes the first step in the degradation of xylenes and toluenes. XylA is responsible for the transport of electrons from the electron donor NADH to the terminal hydroxylase component, XylM. This Pseudomonas putida (Arthrobacter siderocapsulatus) protein is Xylene/toluene monooxygenase electron transfer component XylA.